Consider the following 267-residue polypeptide: Orotidine 5'-phosphate decarboxylase (267 aa).

Substrate contacts are provided by residues D37, 59–61 (KTH), 91–100 (DRKFADIGNT), Y217, and R235. K93 (proton donor) is an active-site residue.

This sequence belongs to the OMP decarboxylase family.

It carries out the reaction orotidine 5'-phosphate + H(+) = UMP + CO2. Its pathway is pyrimidine metabolism; UMP biosynthesis via de novo pathway; UMP from orotate: step 2/2. The polypeptide is Orotidine 5'-phosphate decarboxylase (URA3) (Eremothecium gossypii (strain ATCC 10895 / CBS 109.51 / FGSC 9923 / NRRL Y-1056) (Yeast)).